Here is a 115-residue protein sequence, read N- to C-terminus: MNLILTLLINTLLSSVLVLIAFWLPQLNIYTEKSSPYECGFDPMVSARLPFSMKFFLVAITFLLFDLEIALLLPLPWASQTTNLKTMLTMALILISLLAASLAYEWTQKGLEWTE.

The next 3 helical transmembrane spans lie at 3–23 (LILTLLINTLLSSVLVLIAFW), 55–75 (FFLVAITFLLFDLEIALLLPL), and 86–106 (TMLTMALILISLLAASLAYEW).

Belongs to the complex I subunit 3 family. Core subunit of respiratory chain NADH dehydrogenase (Complex I) which is composed of 45 different subunits. Interacts with TMEM186. Interacts with TMEM242.

The protein localises to the mitochondrion inner membrane. The catalysed reaction is a ubiquinone + NADH + 5 H(+)(in) = a ubiquinol + NAD(+) + 4 H(+)(out). Functionally, core subunit of the mitochondrial membrane respiratory chain NADH dehydrogenase (Complex I) which catalyzes electron transfer from NADH through the respiratory chain, using ubiquinone as an electron acceptor. Essential for the catalytic activity of complex I. The chain is NADH-ubiquinone oxidoreductase chain 3 from Rhinoceros unicornis (Greater Indian rhinoceros).